The sequence spans 833 residues: ERAD-associated E3 ubiquitin-protein ligase component HRD3 (833 aa).

The first 20 residues, 1-20 (MITLLLYLCVICNAIVLIRA), serve as a signal peptide directing secretion. 3 N-linked (GlcNAc...) asparagine glycosylation sites follow: N101, N123, and N142. One copy of the Sel1-like 1 repeat lies at 103–139 (SEATYTLSQIHLWSQYNFPHNMTLAHKYLEKFNDLTH). Sel1-like repeat units follow at residues 143–186 (HSAI…QLGN), 187–222 (LKAK…EQLR), 413–445 (GRAC…KTQA), 552–595 (ETAQ…KQGN), 596–627 (IDAG…LKYS), and 628–663 (IQAI…EHDH). N429 carries N-linked (GlcNAc...) asparagine glycosylation. N611 is a glycosylation site (N-linked (GlcNAc...) asparagine). The helical transmembrane segment at 768–788 (LVTMGCILGIFLLSILMSTLA) threads the bilayer. The tract at residues 805-824 (NGNRQQEQQQQQQAQGPPGW) is disordered. Over residues 809 to 819 (QQEQQQQQQAQ) the composition is skewed to low complexity.

It belongs to the sel-1 family. As to quaternary structure, component of the HRD1 ubiquitin ligase complex which contains the E3 ligase HRD1, its cofactors HRD3, USA1 and DER1, substrate recruiting factor YOS9 and CDC48-binding protein UBX2. Within the complex, interacts directly with HRD1 and YOS9 (via N-terminus). In ERAD-L, HRD3 and YOS9 jointly bind misfolded glycoproteins in the endoplasmic reticulum (ER) lumen. Movement of ERAD-L substrates through the ER membrane is facilitated by HRD1 and DER1 which have lateral gates facing each other and which distort the membrane region between the lateral gates, making it much thinner than a normal phospholipid bilayer. Substrates insert into the membrane as a hairpin loop with one strand interacting with DER1 and the other with HRD1. The HRD1 complex interacts with the heterotrimeric CDC48-NPL4-UFD1 ATPase complex which is recruited by UBX2 via its interaction with CDC48 and which moves ubiquitinated substrates to the cytosol for targeting to the proteasome. The HRD1 complex interacts with the ERAD substrates HMG1 and HMG2. Interacts with KAR2.

It localises to the endoplasmic reticulum membrane. In terms of biological role, component of the endoplasmic reticulum quality control (ERQC) system involved in ubiquitin-dependent degradation of misfolded endoplasmic reticulum proteins. Component of the HRD1 ubiquitin ligase complex, which is part of the ERAD-L and ERAD-M pathways responsible for the rapid degradation of soluble lumenal and membrane proteins with misfolded lumenal domains (ERAD-L), or ER-membrane proteins with misfolded transmembrane domains (ERAD-M). ERAD-L substrates are ubiquitinated through HRD1 in conjunction with the E2 ubiquitin-conjugating enzymes UBC1 and UBC7-CUE1. Ubiquitinated substrates are then removed to the cytosol via the action of the CDC48-NPL4-UFD1 ATPase complex and targeted to the proteasome. ERAD-M substrates are processed by the same HRD1-HRD3 core complex, but only a subset of the other components is required for ERAD-M. Stabilizes the HRD1 ubiquitin-protein ligase. Also functions in recruiting misfolded protein substrates in conjunction with YOS9. The polypeptide is ERAD-associated E3 ubiquitin-protein ligase component HRD3 (HRD3) (Saccharomyces cerevisiae (strain ATCC 204508 / S288c) (Baker's yeast)).